Consider the following 554-residue polypeptide: Valerianol synthase TPS1A (554 aa).

Residues Asp307 and Asp311 each contribute to the Mg(2+) site. The DDXXD motif signature appears at 326-330 (VQRWD). Mg(2+)-binding residues include Asp452, Ser456, and Glu460.

This sequence belongs to the terpene synthase family. Mg(2+) is required as a cofactor. Expressed in flowers.

It carries out the reaction (2E,6E)-farnesyl diphosphate + H2O = valerianol + diphosphate. It functions in the pathway secondary metabolite biosynthesis; terpenoid biosynthesis. In terms of biological role, terpene synthase that catalyzes the biosynthesis of the terpene valerianol, which is a volatile compound of floral scent. This is Valerianol synthase TPS1A from Camellia hiemalis (Camellia).